The chain runs to 194 residues: Large ribosomal subunit protein bL9 (194 aa).

A disordered region spans residues 167-194 (EDRAAEAEAASDMAAGGAGSFEGDHYES).

The protein belongs to the bacterial ribosomal protein bL9 family.

Binds to the 23S rRNA. This chain is Large ribosomal subunit protein bL9, found in Caulobacter sp. (strain K31).